The chain runs to 2139 residues: Voltage-dependent L-type calcium channel subunit alpha-1C (2139 aa).

A disordered region spans residues 1–20 (MVNENTRMYVPEENHQGSNY). The Cytoplasmic portion of the chain corresponds to 1–124 (MVNENTRMYV…RACISIVEWK (124 aa)). The segment at 47–68 (GAALSWQAAIDAARQAKLMGSA) is calmodulin-binding. Positions 73 to 98 (ISTVSSTQRKRQQYGKPKKQGGTTAT) are disordered. Residues 80–91 (QRKRQQYGKPKK) are compositionally biased toward basic residues. The I repeat unit spans residues 111 to 408 (NPIRRACISI…LVLGVLSGEF (298 aa)). A helical membrane pass occupies residues 125–143 (PFEIIILLTIFANCVALAI). At 144–158 (YIPFPEDDSNATNSN) the chain is on the extracellular side. N-linked (GlcNAc...) asparagine glycosylation is present at N153. A helical membrane pass occupies residues 159-179 (LERVEYLFLIIFTVEAFLKVI). The Cytoplasmic segment spans residues 180-188 (AYGLLFHPN). A helical transmembrane segment spans residues 189–209 (AYLRNGWNLLDFIIVVVGLFS). The Extracellular segment spans residues 210-232 (AILEQATKADGANALGGKGAGFD). Residues 233–251 (VKALRAFRVLRPLRLVSGV) traverse the membrane as a helical segment. Residues 252 to 268 (PSLQVVLNSIIKAMVPL) are Cytoplasmic-facing. A helical transmembrane segment spans residues 269–290 (LHIALLVLFVIIIYAIIGLELF). Residues 291 to 350 (MGKMHKTCYNQEGIIDVPAEEDPSPCALETGHGRQCQNGTVCKPGWDGPKHGITNFDNFA) lie on the Extracellular side of the membrane. 2 disulfides stabilise this stretch: C298-C326 and C316-C332. The N-linked (GlcNAc...) asparagine glycan is linked to N328. Residues 351 to 372 (FAMLTVFQCITMEGWTDVLYWM) constitute an intramembrane region (pore-forming). The Selectivity filter of repeat I signature appears at 361-364 (TMEG). E363 lines the Ca(2+) pocket. At 373 to 380 (QDAMGYEL) the chain is on the extracellular side. A helical membrane pass occupies residues 381–401 (PWVYFVSLVIFGSFFVLNLVL). Residues 402 to 524 (GVLSGEFSKE…RKCRAAVKSN (123 aa)) lie on the Cytoplasmic side of the membrane. An AID/alpha-interaction domain; mediates interaction with the beta subunit region spans residues 428-445 (QQLEEDLKGYLDWITQAE). The segment at 449–481 (PENEDEGMDEDKPRNMSMPTSETESVNTENVAG) is disordered. Polar residues predominate over residues 465–478 (SMPTSETESVNTEN). S469 bears the Phosphoserine mark. T476 is modified (phosphothreonine). Residues 510–756 (NRFCRRKCRA…VFLAIAVDNL (247 aa)) form an II repeat. The chain crosses the membrane as a helical span at residues 525 to 543 (VFYWLVIFLVFLNTLTIAS). The Extracellular segment spans residues 544–554 (EHYNQPHWLTE). The helical transmembrane segment at 555–575 (VQDTANKALLALFTAEMLLKM) threads the bilayer. Over 576–586 (YSLGLQAYFVS) the chain is Cytoplasmic. Residues 587-606 (LFNRFDCFIVCGGILETILV) form a helical membrane-spanning segment. Topologically, residues 607-615 (ETKIMSPLG) are extracellular. A helical transmembrane segment spans residues 616 to 634 (ISVLRCVRLLRIFKITRYW). Residues 635–653 (NSLSNLVASLLNSVRSIAS) are Cytoplasmic-facing. The chain crosses the membrane as a helical span at residues 654–673 (LLLLLFLFIIIFSLLGMQLF). Topologically, residues 674-693 (GGKFNFDEMQTRRSTFDNFP) are extracellular. Residues 694–715 (QSLLTVFQILTGEDWNSVMYDG) constitute an intramembrane region (pore-forming). The Selectivity filter of repeat II motif lies at 704–707 (TGED). E706 lines the Ca(2+) pocket. Topologically, residues 716–725 (IMAYGGPSFP) are extracellular. The helical transmembrane segment at 726 to 745 (GMLVCIYFIILFICGNYILL) threads the bilayer. Residues 746–900 (NVFLAIAVDN…LQCHRIVNDT (155 aa)) are Cytoplasmic-facing. The interval 764-861 (SAQKEEEEEK…EMPVGPRPRP (98 aa)) is disordered. Residues 783–806 (SPEKKQEVMEKPAVEESKEEKIEL) show a composition bias toward basic and acidic residues. Residues S808 and S815 each carry the phosphoserine modification. The interaction with STAC2 stretch occupies residues 829 to 876 (SENEDKSPHSNPDTAGEEDEEEPEMPVGPRPRPLSELHLKEKAVPMPE). A compositionally biased stretch (acidic residues) spans 843–852 (AGEEDEEEPE). The stretch at 887-1169 (NRFRLQCHRI…IFVGFVIVTF (283 aa)) is one III repeat. The helical transmembrane segment at 901-919 (IFTNLILFFILLSSISLAA) threads the bilayer. The Extracellular segment spans residues 920–931 (EDPVQHTSFRNH). A helical transmembrane segment spans residues 932–951 (ILGNADYVFTSIFTLEIILK). At 952-967 (MTAYGAFLHKGSFCRN) the chain is on the cytoplasmic side. A helical membrane pass occupies residues 968 to 986 (YFNILDLLVVSVSLISFGI). Residues 987-993 (QSSAINV) lie on the Extracellular side of the membrane. The chain crosses the membrane as a helical span at residues 994–1012 (VKILRVLRVLRPLRAINRA). Residues 1013-1031 (KGLKHVVQCVFVAIRTIGN) are Cytoplasmic-facing. A helical membrane pass occupies residues 1032 to 1051 (IVIVTTLLQFMFACIGVQLF). The Extracellular segment spans residues 1052-1101 (KGKLYTCSDSSKQTEAECKGNYITYKDGEVDHPIIQPRSWENSKFDFDNV). C1058 and C1069 are oxidised to a cystine. Positions 1089 to 1178 (RSWENSKFDF…FQEQGEQEYK (90 aa)) are dihydropyridine binding. An intramembrane region (pore-forming) is located at residues 1102–1122 (LAAMMALFTVSTFEGWPELLY). A Selectivity filter of repeat III motif is present at residues 1113-1116 (TFEG). E1115 is a Ca(2+) binding site. Residues 1123-1139 (RSIDSHTEDKGPIYNYR) lie on the Extracellular side of the membrane. Residues 1140–1161 (VEISIFFIIYIIIIAFFMMNIF) traverse the membrane as a helical segment. The Cytoplasmic portion of the chain corresponds to 1162 to 1219 (VGFVIVTFQEQGEQEYKNCELDKNQRQCVEYALKARPLRRYIPKNQHQYKVWYVVNST). The stretch at 1206–1479 (NQHQYKVWYV…LFVAVIMDNF (274 aa)) is one IV repeat. The helical transmembrane segment at 1220-1241 (YFEYLMFVLILLNTICLAMQHY) threads the bilayer. Residues 1242-1249 (GQSCLFKI) lie on the Extracellular side of the membrane. Residues 1250–1271 (AMNILNMLFTGLFTVEMILKLI) form a helical membrane-spanning segment. At 1272–1281 (AFKPKGYFSD) the chain is on the cytoplasmic side. A helical transmembrane segment spans residues 1282–1301 (PWNVFDFLIVIGSIIDVILS). Topologically, residues 1302 to 1324 (ETNPAEHTQCSPSMSAEENSRIS) are extracellular. A helical transmembrane segment spans residues 1325–1343 (ITFFRLFRVMRLVKLLSRG). The Cytoplasmic portion of the chain corresponds to 1344–1361 (EGIRTLLWTFIKSFQALP). Residues 1362 to 1382 (YVALLIVMLFFIYAVIGMQVF) traverse the membrane as a helical segment. The Extracellular portion of the chain corresponds to 1383–1404 (GKIALNDTTEINRNNNFQTFPQ). A glycan (N-linked (GlcNAc...) asparagine) is linked at N1388. Positions 1405-1423 (AVLLLFRCATGEAWQDIML) form an intramembrane region, pore-forming. Residues 1414 to 1417 (TGEA) carry the Selectivity filter of repeat IV motif. Residues 1424–1451 (ACMPGKKCAPESEPSNSTEGETPCGSSF) lie on the Extracellular side of the membrane. A dihydropyridine binding region spans residues 1430 to 1498 (KCAPESEPSN…LGPHHLDEFK (69 aa)). A disulfide bond links C1431 and C1447. N1439 is a glycosylation site (N-linked (GlcNAc...) asparagine). A phenylalkylamine binding region spans residues 1444–1486 (ETPCGSSFAVFYFISFYMLCAFLIINLFVAVIMDNFDYLTRDW). The chain crosses the membrane as a helical span at residues 1452–1476 (AVFYFISFYMLCAFLIINLFVAVIM). Topologically, residues 1477 to 2139 (DNFDYLTRDW…ADSRSYVSNL (663 aa)) are cytoplasmic. An important for interaction with STAC1, STAC2 and STAC3 region spans residues 1611-1638 (DEVTVGKFYATFLIQEYFRKFKKRKEQG). Positions 1611 to 1644 (DEVTVGKFYATFLIQEYFRKFKKRKEQGLVGKPS) are calmodulin-binding. The calmodulin-binding IQ region stretch occupies residues 1617-1637 (KFYATFLIQEYFRKFKKRKEQ). An important for localization in at the junctional membrane region spans residues 1651–1670 (LQAGLRTLHDIGPEIRRAIS). 2 positions are modified to phosphoserine: S1670 and S1691. 2 stretches are compositionally biased toward polar residues: residues 1732–1741 (KTGNNQADTE) and 1751–1763 (STFT…STGS). The tract at residues 1732 to 1773 (KTGNNQADTESPSHEKLVDSTFTPSSYSSTGSNANINNANNT) is disordered. Residues 1764–1773 (NANINNANNT) are compositionally biased toward low complexity. A Phosphoserine; by PKA modification is found at S1897. Positions 1940-1966 (RSHSPTTFPRPCPTPPVTPGSRGRPLR) are disordered. The segment covering 1947–1957 (FPRPCPTPPVT) has biased composition (pro residues).

This sequence belongs to the calcium channel alpha-1 subunit (TC 1.A.1.11) family. CACNA1C subfamily. In terms of assembly, component of a calcium channel complex consisting of a pore-forming alpha subunit (CACNA1C) and ancillary beta, gamma and delta subunits. The channel complex contains alpha, beta, gamma and delta subunits in a 1:1:1:1 ratio, i.e. it contains only one of each type of subunit. CACNA1C channel activity is modulated by ancillary subunits, such as CACNB1, CACNB2, CACNB3, CACNA2D1 and CACNA2D4. Interacts with the gamma subunits CACNG4, CACNG6, CACNG7 and CACNG8. Interacts with CACNB1. Interacts with CACNB2. Identified in a complex with CACNA2D4 and CACNB3. Interacts with CACNB3. Interacts with CACNA2D1. Interacts with CACNA2D4. Interacts with CALM1. Interacts (via the N-terminus and the C-terminal C and IQ motifs) with CABP1; this inhibits Ca(2+)-dependent channel inactivation. The binding via the C motif is calcium independent whereas the binding via IQ requires the presence of calcium and is mutually exclusive with calmodulin binding. The binding to the cytoplasmic N-terminal domain is calcium independent but is essential for the channel modulation. Interacts (via C-terminal CDB motif) with CABP5; in a calcium-dependent manner. Interacts with CIB1; the interaction increases upon cardiomyocytes hypertrophy. Interacts with STAC2 and STAC3; this inhibits channel inactivation. In terms of processing, phosphorylation by PKA at Ser-1897 activates the channel. Elevated levels of blood glucose lead to increased phosphorylation by PKA. In terms of tissue distribution, detected in embryonic heart. Detected in retina in rod bipolar cells. Detected in tibialis artery (at protein level). Detected in smooth muscle cells from tibialis artery and in mesenteric artery. High expression in heart, followed by brain and spinal cord.

Its subcellular location is the cell membrane. The protein localises to the sarcolemma. It localises to the perikaryon. The protein resides in the postsynaptic density membrane. It is found in the cell projection. Its subcellular location is the dendrite. The protein localises to the T-tubule. The enzyme catalyses Ca(2+)(in) = Ca(2+)(out). Its activity is regulated as follows. Inhibited by dihydropyridines (DHP), such as isradipine. Inhibited by nifedipine. Channel activity is regulated by Ca(2+) and calmodulin. Binding of STAC1, STAC2 or STAC3 to a region that overlaps with the calmodulin binding site inhibits channel inactivation by Ca(2+) and calmodulin. Binding of calmodulin or CABP1 at the same regulatory sites results in opposite effects on the channel function. Shear stress and pressure increases calcium channel activity. Functionally, pore-forming, alpha-1C subunit of the voltage-gated calcium channel that gives rise to L-type calcium currents. Mediates influx of calcium ions into the cytoplasm, and thereby triggers calcium release from the sarcoplasm. Plays an important role in excitation-contraction coupling in the heart. Required for normal heart development and normal regulation of heart rhythm. Required for normal contraction of smooth muscle cells in blood vessels and in the intestine. Essential for normal blood pressure regulation via its role in the contraction of arterial smooth muscle cells. Long-lasting (L-type) calcium channels belong to the 'high-voltage activated' (HVA) group. This is Voltage-dependent L-type calcium channel subunit alpha-1C (Cacna1c) from Mus musculus (Mouse).